We begin with the raw amino-acid sequence, 502 residues long: Myocilin (502 aa).

The N-terminal stretch at 1 to 31 (MPSCAYCCSCGPKMPALQLLFLACLVWGMGA) is a signal peptide. Residues 82–183 (ADLESTKARV…QEVARLRRGQ (102 aa)) adopt a coiled-coil conformation. The disordered stretch occupies residues 166–198 (ARRLEGSSQEVARLRRGQCPSTHHPSQDMLPGS). Residue asparagine 229 is glycosylated (N-linked (GlcNAc...) asparagine). Residues 242–501 (GCGVLMWVGE…MVTYDIKLSE (260 aa)) enclose the Olfactomedin-like domain. Cysteine 243 and cysteine 431 are joined by a disulfide. 5 residues coordinate Ca(2+): aspartate 378, asparagine 426, alanine 427, valine 475, and aspartate 476.

As to quaternary structure, homodimer (via N-terminus). Can also form higher oligomers. Interacts with OLFM3, FN1, NRCAM, GLDN and NFASC. Interacts (via N-terminus) with MYL2. Interacts with SFRP1, FRZB, FZD7, FZD10, FZD1 and WIF1; regulates Wnt signaling. Interacts with SNTA1; regulates muscle hypertrophy. Interacts with ERBB2 and ERBB3; activates ERBB2-ERBB3 signaling pathway. Interacts with SNCG; affects its secretion and its aggregation. In terms of processing, palmitoylated. Undergoes a calcium-dependent proteolytic cleavage at Gln-225 by CAPN2 in the endoplasmic reticulum. The result is the production of two fragments, one of 35 kDa containing the C-terminal olfactomedin-like domain, and another of 20 kDa containing the N-terminal leucine zipper-like domain. Post-translationally, glycosylated. Highly expressed in skeletal muscle and retina. Also detected at lower levels in thyroid gland but not in other endocrine glands such as the adrenal or pituitary glands.

It is found in the secreted. The protein resides in the golgi apparatus. Its subcellular location is the cytoplasmic vesicle. It localises to the extracellular space. The protein localises to the extracellular matrix. It is found in the extracellular exosome. The protein resides in the mitochondrion. Its subcellular location is the mitochondrion intermembrane space. It localises to the mitochondrion inner membrane. The protein localises to the mitochondrion outer membrane. It is found in the rough endoplasmic reticulum. The protein resides in the cell projection. Its subcellular location is the cilium. It localises to the endoplasmic reticulum. Secreted glycoprotein regulating the activation of different signaling pathways in adjacent cells to control different processes including cell adhesion, cell-matrix adhesion, cytoskeleton organization and cell migration. Promotes substrate adhesion, spreading and formation of focal contacts. Negatively regulates cell-matrix adhesion and stress fiber assembly through Rho protein signal transduction. Modulates the organization of actin cytoskeleton by stimulating the formation of stress fibers through interactions with components of Wnt signaling pathways. Promotes cell migration through activation of PTK2 and the downstream phosphatidylinositol 3-kinase signaling. Plays a role in bone formation and promotes osteoblast differentiation in a dose-dependent manner through mitogen-activated protein kinase signaling. Mediates myelination in the peripheral nervous system through ERBB2/ERBB3 signaling. Plays a role as a regulator of muscle hypertrophy through the components of dystrophin-associated protein complex. Involved in positive regulation of mitochondrial depolarization. Plays a role in neurite outgrowth. May participate in the obstruction of fluid outflow in the trabecular meshwork. The polypeptide is Myocilin (Myoc) (Rattus norvegicus (Rat)).